We begin with the raw amino-acid sequence, 142 residues long: 3-hydroxyacyl-[acyl-carrier-protein] dehydratase FabZ (142 aa).

Histidine 48 is a catalytic residue.

Belongs to the thioester dehydratase family. FabZ subfamily.

It is found in the cytoplasm. The catalysed reaction is a (3R)-hydroxyacyl-[ACP] = a (2E)-enoyl-[ACP] + H2O. Involved in unsaturated fatty acids biosynthesis. Catalyzes the dehydration of short chain beta-hydroxyacyl-ACPs and long chain saturated and unsaturated beta-hydroxyacyl-ACPs. The polypeptide is 3-hydroxyacyl-[acyl-carrier-protein] dehydratase FabZ (Anoxybacillus flavithermus (strain DSM 21510 / WK1)).